The following is a 218-amino-acid chain: Ribose-5-phosphate isomerase A (218 aa).

Substrate-binding positions include T28 to T31, D81 to D84, and K94 to G97. E103 acts as the Proton acceptor in catalysis. Residue K121 participates in substrate binding.

The protein belongs to the ribose 5-phosphate isomerase family. Homodimer.

It carries out the reaction aldehydo-D-ribose 5-phosphate = D-ribulose 5-phosphate. It functions in the pathway carbohydrate degradation; pentose phosphate pathway; D-ribose 5-phosphate from D-ribulose 5-phosphate (non-oxidative stage): step 1/1. Its function is as follows. Catalyzes the reversible conversion of ribose-5-phosphate to ribulose 5-phosphate. The polypeptide is Ribose-5-phosphate isomerase A (Vibrio parahaemolyticus serotype O3:K6 (strain RIMD 2210633)).